We begin with the raw amino-acid sequence, 46 residues long: Homeobox protein Hox-D4 (46 aa).

A DNA-binding region (homeobox) is located at residues 1–46 (VNSNYTGGEPKRSRTAYTRQQVLELEKEFLFNRYLTRRRRIQHTLT).

This sequence belongs to the Antp homeobox family. Deformed subfamily. As to quaternary structure, forms a DNA-binding heterodimer with transcription factor PBX1.

It is found in the nucleus. Sequence-specific transcription factor which is part of a developmental regulatory system that provides cells with specific positional identities on the anterior-posterior axis. This chain is Homeobox protein Hox-D4 (HOXD4), found in Ovis aries (Sheep).